The sequence spans 208 residues: MQPWLWLVFSVKLSALWGSSALLQTPSSLLVQTNQTAKMSCEAKTFPKGTTIYWLRELQDSNKNKHFEFLASRTSTKGIKYGERVKKNMTLSFNSTLPFLKIMDVKPEDSGFYFCAMVGSPMVVFGTGTKLTVVDVLPTTAPTKKTTLKKKQCPTPHPKTQKGLTCGLITLSLLVACILVLLVSLSVAIHFHCMRRRARIHFMKQFHK.

A signal peptide spans Met-1–Ala-21. The 110-residue stretch at Leu-22 to Leu-131 folds into the Ig-like V-type domain. Residues Leu-22–Leu-168 lie on the Extracellular side of the membrane. Asn-34, Asn-88, and Asn-94 each carry an N-linked (GlcNAc...) asparagine glycan. Cys-41 and Cys-115 are oxidised to a cystine. A helical transmembrane segment spans residues Ile-169–Ile-189. Over His-190–Lys-208 the chain is Cytoplasmic.

In terms of assembly, forms disulfide-linked heterodimers with CD8A at the cell surface. Interacts with CD3D; this interaction couples TCR-CD3 with CD8. Interacts with LCK. Phosphorylated as a consequence of T-cell activation. Post-translationally, palmitoylated at the cytoplasmic tail and thereby targets the heterodimer CD8A/CD8B to lipid rafts unlike CD8A homodimers.

It localises to the cell membrane. Integral membrane glycoprotein that plays an essential role in the immune response and serves multiple functions in responses against both external and internal offenses. In T-cells, functions primarily as a coreceptor for MHC class I molecule:peptide complex. The antigens presented by class I peptides are derived from cytosolic proteins while class II derived from extracellular proteins. Interacts simultaneously with the T-cell receptor (TCR) and the MHC class I proteins presented by antigen presenting cells (APCs). In turn, recruits the Src kinase LCK to the vicinity of the TCR-CD3 complex. A palmitoylation site in the cytoplasmic tail of CD8B chain contributes to partitioning of CD8 into the plasma membrane lipid rafts where signaling proteins are enriched. Once LCK recruited, it initiates different intracellular signaling pathways by phosphorylating various substrates ultimately leading to lymphokine production, motility, adhesion and activation of cytotoxic T-lymphocytes (CTLs). Additionally, plays a critical role in thymic selection of CD8+ T-cells. This Rattus norvegicus (Rat) protein is T-cell surface glycoprotein CD8 beta chain (Cd8b).